The following is a 353-amino-acid chain: (S)-8-amino-7-oxononanoate synthase BioU (353 aa).

10–14 (GTGGI) is a binding site for NAD(+). Lysine 147 acts as the Nucleophile in catalysis. Allysine is present on lysine 147. Position 214-215 (214-215 (GT)) interacts with NAD(+). The active-site Proton acceptor is the glutamate 218. The active-site Proton donor and proton acceptor is histidine 222.

Belongs to the BioU family. As to quaternary structure, monomer.

It carries out the reaction (8S)-8-amino-7-oxononanoate + L-lysyl-[protein] + CO2 = (S)-2-amino-6-oxohexanoyl-[protein] + (7R,8S)-8-amino-7-(carboxyamino)nonanoate + 2 H(+). The catalysed reaction is (8S)-8-amino-7-oxononanoate + L-lysyl-[protein] + NADPH + H(+) = N(6)-[(2S,3R)-2-amino-8-carboxyoctan-3-yl]-L-lysyl-[protein] + NADP(+) + H2O. It catalyses the reaction N(6)-[(2S,3R)-2-amino-8-carboxyoctan-3-yl]-L-lysyl-[protein] + CO2 + NADP(+) + H2O = (S)-2-amino-6-oxohexanoyl-[protein] + (7R,8S)-8-amino-7-(carboxyamino)nonanoate + NADPH + 3 H(+). The enzyme catalyses (8S)-8-amino-7-oxononanoate + L-lysyl-[protein] + NADH + H(+) = N(6)-[(2S,3R)-2-amino-8-carboxyoctan-3-yl]-L-lysyl-[protein] + NAD(+) + H2O. It carries out the reaction N(6)-[(2S,3R)-2-amino-8-carboxyoctan-3-yl]-L-lysyl-[protein] + CO2 + NAD(+) + H2O = (S)-2-amino-6-oxohexanoyl-[protein] + (7R,8S)-8-amino-7-(carboxyamino)nonanoate + NADH + 3 H(+). The protein operates within cofactor biosynthesis; biotin biosynthesis. Functionally, a 'suicide' enzyme that participates in biotin synthesis. Catalyzes the formation of (S)-8-amino-7-oxononanoate (DAN-carbamic acid) from (7R,8S)-8-amino-7-(carboxyamino)nonanoate (DAN), a function equivalent to the cannonical BioA reaction and the first half-reaction of BioD. The cellular requirement for biotin is thought be low enough that this single turnover enzyme supplies a sufficient amount of the cofactor. Overall it catalyzes three reactions: formation of a covalent linkage with 8-amino-7-oxononanoate to yield a BioU-DAN conjugate at the epsilon-amino group of Lys124 of BioU using NAD(P)H, carboxylation of the conjugate to form BioU-DAN-carbamic acid, and release of DAN-carbamic acid using NAD(P)+. Complements a bioA deletion in E.coli. In Haloferax mediterranei (strain ATCC 33500 / DSM 1411 / JCM 8866 / NBRC 14739 / NCIMB 2177 / R-4) (Halobacterium mediterranei), this protein is (S)-8-amino-7-oxononanoate synthase BioU.